The following is a 72-amino-acid chain: SRY-related protein AES1 (72 aa).

Residues 1–69 (VKRPMNAFMV…KHMADYPDYK (69 aa)) constitute a DNA-binding region (HMG box).

The protein resides in the nucleus. This is SRY-related protein AES1 from Alligator mississippiensis (American alligator).